The sequence spans 1324 residues: Mediator of RNA polymerase II transcription subunit 13 (1324 aa).

Disordered regions lie at residues 296–346 (ESGV…PPEA), 386–455 (FFDD…ATTA), 535–590 (GRFF…EPEI), 607–631 (HDDK…SNNS), 694–816 (KGGQ…VPSA), and 1151–1198 (TGSD…PDIY). Over residues 298 to 331 (GVNTNESTAAQPQPAQNGTNSMAPAAGTTNATTQ) the composition is skewed to polar residues. Residues 398–407 (DGDNDNGNDN) are compositionally biased toward acidic residues. Basic and acidic residues predominate over residues 408 to 442 (DNDKADAMDVDVKEEAKKEEMIKKETKEEVPVKEE). Residues 546 to 566 (DNEGSSDNTGDSSDSGDGSES) show a composition bias toward low complexity. Basic and acidic residues-rich tracts occupy residues 567-578 (VPRDVKRQKVDE) and 607-617 (HDDKPAKKIDS). Composition is skewed to low complexity over residues 618-631 (SNDT…SNNS) and 724-743 (SNAS…QMGA). Residues 750–784 (LSPSRGATPQPEGSSPETRPSNWTPGITSQVNSAA) are compositionally biased toward polar residues. 2 stretches are compositionally biased toward low complexity: residues 785–816 (SSPV…VPSA) and 1172–1184 (TGAA…GSAP).

It belongs to the Mediator complex subunit 13 family. As to quaternary structure, component of the SRB8-11 complex, which itself associates with the Mediator complex.

It localises to the nucleus. Functionally, component of the SRB8-11 complex. The SRB8-11 complex is a regulatory module of the Mediator complex which is itself involved in regulation of basal and activated RNA polymerase II-dependent transcription. The SRB8-11 complex may be involved in the transcriptional repression of a subset of genes regulated by Mediator. It may inhibit the association of the Mediator complex with RNA polymerase II to form the holoenzyme complex. This Yarrowia lipolytica (strain CLIB 122 / E 150) (Yeast) protein is Mediator of RNA polymerase II transcription subunit 13 (SSN2).